We begin with the raw amino-acid sequence, 374 residues long: Deoxyguanosinetriphosphate triphosphohydrolase-like protein (374 aa).

Residues 65-196 (RLTHSLEVAQ…ANLADEIAYN (132 aa)) form the HD domain.

Belongs to the dGTPase family. Type 2 subfamily.

In Nitrosomonas europaea (strain ATCC 19718 / CIP 103999 / KCTC 2705 / NBRC 14298), this protein is Deoxyguanosinetriphosphate triphosphohydrolase-like protein (dgt).